The chain runs to 412 residues: Divalent metal cation transporter MntH (412 aa).

The Cytoplasmic segment spans residues 1–19; it reads MTNYRVESSSGRAARKMRL. The helical transmembrane segment at 20–39 threads the bilayer; sequence ALMGPAFIAAIGYIDPGNFA. The Periplasmic portion of the chain corresponds to 40 to 51; the sequence is TNIQAGASFGYQ. Residues 52–71 form a helical membrane-spanning segment; that stretch reads LLWVVVWANLMAMLIQILSA. At 72–95 the chain is on the cytoplasmic side; it reads KLGIATGKNLAEQIRDHYPRPVVW. Residues 96–118 form a helical membrane-spanning segment; that stretch reads FYWVQAEIIAMATDLAEFIGAAI. Topologically, residues 119-125 are periplasmic; it reads GFKLILG. Residues 126–145 traverse the membrane as a helical segment; that stretch reads VSLLQGAVLTGIATFLILML. Residues 146-155 lie on the Cytoplasmic side of the membrane; it reads QRRGQKPLEK. The chain crosses the membrane as a helical span at residues 156-175; it reads VIGGLLLFVAAAYIVELIFS. At 176 to 196 the chain is on the periplasmic side; sequence QPNLAQLGKGMVIPSLPTSEA. Residues 197–220 traverse the membrane as a helical segment; sequence VFLAAGVLGATIMPHVIYLHSSLT. Residues 221–238 are Cytoplasmic-facing; that stretch reads QHLHGGSRQQRYSATKWD. The chain crosses the membrane as a helical span at residues 239–258; the sequence is VAIAMTIAGFVNLVMMATAA. At 259 to 276 the chain is on the periplasmic side; that stretch reads AAFHFSGHTGVADLDEAY. Residues 277–297 traverse the membrane as a helical segment; sequence LTLQPLLSHAAATVFGLSLVA. Residues 298–327 lie on the Cytoplasmic side of the membrane; the sequence is AGLSSTVVGTLAGQVVMQGFIRFHIPLWVR. A helical membrane pass occupies residues 328-344; the sequence is RTVTMLPSFIVILMGLD. The Periplasmic segment spans residues 345–350; it reads PTRILV. The helical transmembrane segment at 351–370 threads the bilayer; the sequence is MSQVLLSFGIALALVPLLIF. Topologically, residues 371–387 are cytoplasmic; sequence TSDSKLMGDLVNSKRVK. A helical transmembrane segment spans residues 388–406; sequence QTGWVIVVLVVALNIWLLV. The Periplasmic portion of the chain corresponds to 407–412; the sequence is GTALGL.

This sequence belongs to the NRAMP family.

The protein resides in the cell inner membrane. Its function is as follows. H(+)-stimulated, divalent metal cation uptake system. The chain is Divalent metal cation transporter MntH from Shigella flexneri serotype 5b (strain 8401).